Reading from the N-terminus, the 334-residue chain is HTH-type transcriptional repressor PurR (334 aa).

Residues 2–56 (ATIKDVAKMAGVSTTTVSHVINKTRHVADETKQTVLDAIKALNYSPSAVARSLKV) enclose the HTH lacI-type domain. A DNA-binding region (H-T-H motif) is located at residues 4 to 23 (IKDVAKMAGVSTTTVSHVIN). A DNA-binding region spans residues 48 to 56 (SAVARSLKV). Positions 73, 189, 191, 220, and 274 each coordinate hypoxanthine.

As to quaternary structure, homodimer.

Its pathway is purine metabolism; purine nucleotide biosynthesis [regulation]. Its function is as follows. Is the main repressor of the genes involved in the de novo synthesis of purine nucleotides, regulating purB, purC, purEK, purF, purHD, purL, purMN and guaBA expression. PurR is allosterically activated to bind its cognate DNA by binding the purine corepressors, hypoxanthine or guanine, thereby effecting transcription repression. In Mannheimia succiniciproducens (strain KCTC 0769BP / MBEL55E), this protein is HTH-type transcriptional repressor PurR.